A 473-amino-acid polypeptide reads, in one-letter code: Exodeoxyribonuclease I (473 aa).

An Exonuclease domain is found at 9 to 188; sequence IYDYESFGVN…AMADVYATIA (180 aa). Mg(2+) is bound by residues aspartate 11, glutamate 13, and aspartate 182. Glutamate 13 serves as a coordination point for substrate. The 156-residue stretch at 198–353 folds into the ExoI SH3-like domain; that stretch reads PKLFQYFFEN…KVADIFNEER (156 aa). In terms of domain architecture, ExoI C-terminal spans 356 to 472; that stretch reads ASNDNVETEL…QVYEYGIKLL (117 aa).

Monomer. Interacts with ssb (via C-terminus); this interaction stimulates the exonuclease activity by recruiting the enzyme to its substrate. Mg(2+) is required as a cofactor.

It catalyses the reaction Exonucleolytic cleavage in the 3'- to 5'-direction to yield nucleoside 5'-phosphates.. Functionally, degrades single-stranded DNA (ssDNA) in a highly processive manner. Also functions as a DNA deoxyribophosphodiesterase that releases deoxyribose-phosphate moieties following the cleavage of DNA at an apurinic/apyrimidinic (AP) site by either an AP endonuclease or AP lyase. Involved in genome maintenance but probably not in phase variation, which contributes to the virulence and disease. The polypeptide is Exodeoxyribonuclease I (sbcB) (Haemophilus influenzae (strain ATCC 51907 / DSM 11121 / KW20 / Rd)).